The chain runs to 295 residues: Elongation factor Ts (295 aa).

Positions 79-82 (TDFV) are involved in Mg(2+) ion dislocation from EF-Tu.

This sequence belongs to the EF-Ts family.

The protein resides in the cytoplasm. Functionally, associates with the EF-Tu.GDP complex and induces the exchange of GDP to GTP. It remains bound to the aminoacyl-tRNA.EF-Tu.GTP complex up to the GTP hydrolysis stage on the ribosome. The protein is Elongation factor Ts of Bacillus cytotoxicus (strain DSM 22905 / CIP 110041 / 391-98 / NVH 391-98).